Reading from the N-terminus, the 1068-residue chain is Sucrose-phosphate synthase (1068 aa).

Disordered regions lie at residues histidine 18–methionine 47 and lysine 118–glutamate 139. The span at glycine 23–aspartate 32 shows a compositional bias: gly residues. The segment covering lysine 118–threonine 128 has biased composition (basic and acidic residues).

The protein belongs to the glycosyltransferase 1 family. In terms of assembly, homodimer or homotetramer.

It catalyses the reaction beta-D-fructose 6-phosphate + UDP-alpha-D-glucose = sucrose 6(F)-phosphate + UDP + H(+). The protein operates within glycan biosynthesis; sucrose biosynthesis; sucrose from D-fructose 6-phosphate and UDP-alpha-D-glucose: step 1/2. Activity is regulated by phosphorylation and moderated by concentration of metabolites and light. In terms of biological role, plays a role in photosynthetic sucrose synthesis by catalyzing the rate-limiting step of sucrose biosynthesis from UDP-glucose and fructose- 6-phosphate. Involved in the regulation of carbon partitioning in the leaves of plants. May regulate the synthesis of sucrose and therefore play a major role as a limiting factor in the export of photoassimilates out of the leaf. Plays a role for sucrose availability that is essential for plant growth and fiber elongation. The polypeptide is Sucrose-phosphate synthase (Zea mays (Maize)).